A 449-amino-acid chain; its full sequence is UNC93-like protein MFSD11 (449 aa).

Residues 8 to 28 form a helical membrane-spanning segment; the sequence is LFNIIILGVAFMFMFTAFQTC. N-linked (GlcNAc...) asparagine glycosylation is present at asparagine 40. 5 helical membrane passes run 53-73, 74-94, 96-116, 138-158, and 170-190; these read AIIY…VAIV, GPQL…AVFI, PFPW…AVLW, IFWA…YFAW, and RTVF…FFLI. Serine 204 is subject to Phosphoserine. Helical transmembrane passes span 239-259, 277-297, 309-329, 359-379, 385-405, and 410-430; these read MLLL…FSGV, LIGL…SLFG, PVVL…FLNM, FLLG…LGFL, APAF…AFFY, and LLHW…ISFF.

It belongs to the unc-93 family.

It is found in the membrane. The chain is UNC93-like protein MFSD11 (MFSD11) from Macaca fascicularis (Crab-eating macaque).